Here is a 476-residue protein sequence, read N- to C-terminus: Eukaryotic translation initiation factor 3 subunit L (476 aa).

Residues 257-452 (DAIRMFSHIL…DLDYALEKDL (196 aa)) enclose the PCI domain.

The protein belongs to the eIF-3 subunit L family. As to quaternary structure, component of the eukaryotic translation initiation factor 3 (eIF-3) complex.

The protein localises to the cytoplasm. In terms of biological role, component of the eukaryotic translation initiation factor 3 (eIF-3) complex, which is involved in protein synthesis of a specialized repertoire of mRNAs and, together with other initiation factors, stimulates binding of mRNA and methionyl-tRNAi to the 40S ribosome. The eIF-3 complex specifically targets and initiates translation of a subset of mRNAs involved in cell proliferation. This Aspergillus terreus (strain NIH 2624 / FGSC A1156) protein is Eukaryotic translation initiation factor 3 subunit L.